The sequence spans 244 residues: MKIDLNADLGEGCASDAELLTLVSSANIACGFHAGDAQIMQACVREAIKNGVAIGAHPSFPDRENFGRSAMQLPPETVYAQTLYQIGALATIARAQGGVMRHVKPHGMLYNQAAKEAQLADAIARAVYACDPALILVGLAGSELIRAGKQYGLTTREEVFADRGYQADGSLVPRSQSGALIENEEQALAQTLEMVQHGRVKSITGEWATVAAQTVCLHGDGEHALAFARRLRSAFAEKGIVVAA.

This sequence belongs to the LamB/PxpA family. Forms a complex composed of PxpA, PxpB and PxpC.

It catalyses the reaction 5-oxo-L-proline + ATP + 2 H2O = L-glutamate + ADP + phosphate + H(+). Functionally, catalyzes the cleavage of 5-oxoproline to form L-glutamate coupled to the hydrolysis of ATP to ADP and inorganic phosphate. The sequence is that of 5-oxoprolinase subunit A from Escherichia coli (strain K12).